The sequence spans 125 residues: UPF0231 protein HD_1708 (125 aa).

It belongs to the UPF0231 family.

The chain is UPF0231 protein HD_1708 from Haemophilus ducreyi (strain 35000HP / ATCC 700724).